A 427-amino-acid chain; its full sequence is Glutamyl-tRNA(Gln) amidotransferase subunit D (427 aa).

One can recognise an Asparaginase/glutaminase domain in the interval 74–407 (ERVYIIGAGG…EVVRKMFQRN (334 aa)). Catalysis depends on residues Thr84, Thr160, Asp161, and Lys240.

This sequence belongs to the asparaginase 1 family. GatD subfamily. In terms of assembly, heterodimer of GatD and GatE.

It carries out the reaction L-glutamyl-tRNA(Gln) + L-glutamine + ATP + H2O = L-glutaminyl-tRNA(Gln) + L-glutamate + ADP + phosphate + H(+). In terms of biological role, allows the formation of correctly charged Gln-tRNA(Gln) through the transamidation of misacylated Glu-tRNA(Gln) in organisms which lack glutaminyl-tRNA synthetase. The reaction takes place in the presence of glutamine and ATP through an activated gamma-phospho-Glu-tRNA(Gln). The GatDE system is specific for glutamate and does not act on aspartate. This chain is Glutamyl-tRNA(Gln) amidotransferase subunit D, found in Aeropyrum pernix (strain ATCC 700893 / DSM 11879 / JCM 9820 / NBRC 100138 / K1).